The primary structure comprises 693 residues: MAREFSLEKTRNIGIMAHIDAGKTTTTERILYYTGRIHKIGETHEGASQMDWMEQEQDRGITITSAATTAAWEGHRVNIIDTPGHVDFTVEVERSLRVLDGAVTVLDAQSGVEPQTETVWRQATTYGVPRIVFVNKMDKLGANFEYSVSTLHDRLQANAAPIQLPIGAEDEFEAIIDLVEMKCFKYTNDLGTEIEEIEIPEDHLDRAEEARASLIEAVAETSDELMEKYLGDEEISVSELKEAIRQATTNVEFYPVLCGTAFKNKGVQLMLDAVIDYLPSPLDVKPIIGHRASNPEEEVIAKADDSAEFAALAFKVMTDPYVGKLTFFRVYSGTMTSGSYVKNSTKGKRERVGRLLQMHANSRQEIDTVYSGDIAAAVGLKDTGTGDTLCGEKNDIILESMEFPEPVIHLSVEPKSKADQDKMTQALVKLQEEDPTFHAHTDEETGQVIIGGMGELHLDILVDRMKKEFNVECNVGAPMVSYRETFKSSAQVQGKFSRQSGGRGQYGDVHIEFTPNETGAGFEFENAIVGGVVPREYIPSVEAGLKDAMENGVLAGYPLIDVKAKLYDGSYHDVDSSEMAFKIAASLALKEAAKKCDPVILEPMMKVTIEMPEEYMGDIMGDVTSRRGRVDGMEPRGNAQVVNAYVPLSEMFGYATSLRSNTQGRGTYTMYFDHYAEVPKSIAEDIIKKNKGE.

Residues 8–282 (EKTRNIGIMA…AVIDYLPSPL (275 aa)) form the tr-type G domain. GTP contacts are provided by residues 17–24 (AHIDAGKT), 81–85 (DTPGH), and 135–138 (NKMD).

This sequence belongs to the TRAFAC class translation factor GTPase superfamily. Classic translation factor GTPase family. EF-G/EF-2 subfamily.

The protein resides in the cytoplasm. Catalyzes the GTP-dependent ribosomal translocation step during translation elongation. During this step, the ribosome changes from the pre-translocational (PRE) to the post-translocational (POST) state as the newly formed A-site-bound peptidyl-tRNA and P-site-bound deacylated tRNA move to the P and E sites, respectively. Catalyzes the coordinated movement of the two tRNA molecules, the mRNA and conformational changes in the ribosome. This chain is Elongation factor G, found in Staphylococcus aureus (strain Mu3 / ATCC 700698).